The sequence spans 114 residues: Protein Tat (114 aa).

Residues 1-24 (MDPVDPEVPPWHHPGSQPQIPCNN) form an interaction with human CREBBP region. The transactivation stretch occupies residues 1-48 (MDPVDPEVPPWHHPGSQPQIPCNNCYCKRCCYHCYVCFVRKGLGISYG). 3 residues coordinate Zn(2+): C22, C25, and C27. The interval 22-37 (CNNCYCKRCCYHCYVC) is cysteine-rich. K28 bears the N6-acetyllysine; by host PCAF mark. The Zn(2+) site is built by C30, H33, C34, and C37. Residues 38 to 48 (FVRKGLGISYG) are core. Residues 48-114 (GRKKRGRPAA…CHCCTRTSEQ (67 aa)) form a disordered region. Residues 49–56 (RKKRGRPA) carry the Nuclear localization signal, RNA-binding (TAR), and protein transduction motif. The tract at residues 49–84 (RKKRGRPAAASHPDHKDPVPKQSPTITKRKQERQEE) is interaction with the host capping enzyme RNGTT. K50 and K51 each carry N6-acetyllysine; by host EP300 and GCN5L2. An Asymmetric dimethylarginine; by host PRMT6 modification is found at R52. K69 participates in a covalent cross-link: Glycyl lysine isopeptide (Lys-Gly) (interchain with G-Cter in ubiquitin).

The protein belongs to the lentiviruses Tat family. As to quaternary structure, interacts with host CCNT1. Associates with the P-TEFb complex composed at least of Tat, P-TEFb (CDK9 and CCNT1), TAR RNA, RNA Pol II. Recruits the HATs CREBBP, TAF1/TFIID, EP300, PCAF and GCN5L2. Interacts with host KAT5/Tip60; this interaction targets the latter to degradation. Interacts with the host deacetylase SIRT1. Interacts with host capping enzyme RNGTT; this interaction stimulates RNGTT. Binds to host KDR, and to the host integrins ITGAV/ITGB3 and ITGA5/ITGB1. Interacts with host KPNB1/importin beta-1 without previous binding to KPNA1/importin alpha-1. Interacts with EIF2AK2. Interacts with host nucleosome assembly protein NAP1L1; this interaction may be required for the transport of Tat within the nucleus, since the two proteins interact at the nuclear rim. Interacts with host C1QBP/SF2P32; this interaction involves lysine-acetylated Tat. Interacts with the host chemokine receptors CCR2, CCR3 and CXCR4. Interacts with host DPP4/CD26; this interaction may trigger an anti-proliferative effect. Interacts with host LDLR. Interacts with the host extracellular matrix metalloproteinase MMP1. Interacts with host PRMT6; this interaction mediates Tat's methylation. Interacts with, and is ubiquitinated by MDM2/Hdm2. Interacts with host PSMC3 and HTATIP2. Interacts with STAB1; this interaction may overcome SATB1-mediated repression of IL2 and IL2RA (interleukin) in T cells by binding to the same domain than HDAC1. Interacts (when acetylated) with human CDK13, thereby increasing HIV-1 mRNA splicing and promoting the production of the doubly spliced HIV-1 protein Nef. Interacts with host TBP; this interaction modulates the activity of transcriptional pre-initiation complex. Interacts with host RELA. Interacts with host PLSCR1; this interaction negatively regulates Tat transactivation activity by altering its subcellular distribution. In terms of processing, asymmetrical arginine methylation by host PRMT6 seems to diminish the transactivation capacity of Tat and affects the interaction with host CCNT1. Post-translationally, acetylation by EP300, CREBBP, GCN5L2/GCN5 and PCAF regulates the transactivation activity of Tat. EP300-mediated acetylation of Lys-50 promotes dissociation of Tat from the TAR RNA through the competitive binding to PCAF's bromodomain. In addition, the non-acetylated Tat's N-terminus can also interact with PCAF. PCAF-mediated acetylation of Lys-28 enhances Tat's binding to CCNT1. Lys-50 is deacetylated by SIRT1. Polyubiquitination by host MDM2 does not target Tat to degradation, but activates its transactivation function and fosters interaction with CCNT1 and TAR RNA. In terms of processing, phosphorylated by EIF2AK2 on serine and threonine residues adjacent to the basic region important for TAR RNA binding and function. Phosphorylation of Tat by EIF2AK2 is dependent on the prior activation of EIF2AK2 by dsRNA.

The protein resides in the host nucleus. It localises to the host nucleolus. The protein localises to the host cytoplasm. Its subcellular location is the secreted. In terms of biological role, transcriptional activator that increases RNA Pol II processivity, thereby increasing the level of full-length viral transcripts. Recognizes a hairpin structure at the 5'-LTR of the nascent viral mRNAs referred to as the transactivation responsive RNA element (TAR) and recruits the cyclin T1-CDK9 complex (P-TEFb complex) that will in turn hyperphosphorylate the RNA polymerase II to allow efficient elongation. The CDK9 component of P-TEFb and other Tat-activated kinases hyperphosphorylate the C-terminus of RNA Pol II that becomes stabilized and much more processive. Other factors such as HTATSF1/Tat-SF1, SUPT5H/SPT5, and HTATIP2 are also important for Tat's function. Besides its effect on RNA Pol II processivity, Tat induces chromatin remodeling of proviral genes by recruiting the histone acetyltransferases (HATs) CREBBP, EP300 and PCAF to the chromatin. This also contributes to the increase in proviral transcription rate, especially when the provirus integrates in transcriptionally silent region of the host genome. To ensure maximal activation of the LTR, Tat mediates nuclear translocation of NF-kappa-B by interacting with host RELA. Through its interaction with host TBP, Tat may also modulate transcription initiation. Tat can reactivate a latently infected cell by penetrating in it and transactivating its LTR promoter. In the cytoplasm, Tat is thought to act as a translational activator of HIV-1 mRNAs. Its function is as follows. Extracellular circulating Tat can be endocytosed by surrounding uninfected cells via the binding to several surface receptors such as CD26, CXCR4, heparan sulfate proteoglycans (HSPG) or LDLR. Neurons are rarely infected, but they internalize Tat via their LDLR. Through its interaction with nuclear HATs, Tat is potentially able to control the acetylation-dependent cellular gene expression. Modulates the expression of many cellular genes involved in cell survival, proliferation or in coding for cytokines or cytokine receptors. Tat plays a role in T-cell and neurons apoptosis. Tat induced neurotoxicity and apoptosis probably contribute to neuroAIDS. Circulating Tat also acts as a chemokine-like and/or growth factor-like molecule that binds to specific receptors on the surface of the cells, affecting many cellular pathways. In the vascular system, Tat binds to ITGAV/ITGB3 and ITGA5/ITGB1 integrins dimers at the surface of endothelial cells and competes with bFGF for heparin-binding sites, leading to an excess of soluble bFGF. This is Protein Tat from Homo sapiens (Human).